Reading from the N-terminus, the 619-residue chain is Chaperone protein HscA homolog (619 aa).

Belongs to the heat shock protein 70 family.

Its function is as follows. Chaperone involved in the maturation of iron-sulfur cluster-containing proteins. Has a low intrinsic ATPase activity which is markedly stimulated by HscB. In Haemophilus influenzae (strain PittGG), this protein is Chaperone protein HscA homolog.